The following is an 84-amino-acid chain: Large ribosomal subunit protein bL27 (84 aa).

The interval 1 to 24 (MAHKKGAASTKNGRDSNSQRLGVK) is disordered. Polar residues predominate over residues 9–20 (STKNGRDSNSQR).

The protein belongs to the bacterial ribosomal protein bL27 family.

The polypeptide is Large ribosomal subunit protein bL27 (Nocardioides sp. (strain ATCC BAA-499 / JS614)).